The sequence spans 293 residues: Acetylglutamate kinase (293 aa).

Residues 65 to 66 (GG), Arg-87, and Asn-188 contribute to the substrate site.

This sequence belongs to the acetylglutamate kinase family. ArgB subfamily.

Its subcellular location is the cytoplasm. It carries out the reaction N-acetyl-L-glutamate + ATP = N-acetyl-L-glutamyl 5-phosphate + ADP. The protein operates within amino-acid biosynthesis; L-arginine biosynthesis; N(2)-acetyl-L-ornithine from L-glutamate: step 2/4. Catalyzes the ATP-dependent phosphorylation of N-acetyl-L-glutamate. The polypeptide is Acetylglutamate kinase (Symbiobacterium thermophilum (strain DSM 24528 / JCM 14929 / IAM 14863 / T)).